The sequence spans 156 residues: Envelope glycoprotein L (156 aa).

Residues 1–16 form the signal peptide; sequence MSPLVAVLVFFSAALG. The interval 21–141 is interaction with gH; it reads GVAGNPHGLD…KELGEVAVHK (121 aa). Residues 50–156 enclose the gL alphaherpesvirus-type domain; that stretch reads ELEWDDEDHP…LRYNGGPPAE (107 aa). C71 and C95 form a disulfide bridge.

Belongs to the herpesviridae glycoprotein L (gL) family. Alphaherpesvirinae gL subfamily. As to quaternary structure, interacts with glycoprotein H (gH); this interaction is necessary for the correct processing and cell surface expression of gH. The heterodimer gH/gL seems to interact with gB trimers during fusion. Post-translationally, O-glycosylated, and sialylated.

Its subcellular location is the virion membrane. It is found in the host cell membrane. The protein resides in the host Golgi apparatus. The protein localises to the host trans-Golgi network. The heterodimer glycoprotein H-glycoprotein L is required for the fusion of viral and plasma membranes leading to virus entry into the host cell. Acts as a functional inhibitor of gH and maintains gH in an inhibited form. Upon binding to host integrins, gL dissociates from gH leading to activation of the viral fusion glycoproteins gB and gH. This chain is Envelope glycoprotein L, found in Sus scrofa (Pig).